The following is a 91-amino-acid chain: Large ribosomal subunit protein uL23c (91 aa).

The protein belongs to the universal ribosomal protein uL23 family. In terms of assembly, part of the 50S ribosomal subunit.

Its subcellular location is the plastid. It is found in the chloroplast. Its function is as follows. Binds to 23S rRNA. This chain is Large ribosomal subunit protein uL23c (rpl23), found in Anthoceros angustus (Hornwort).